The sequence spans 283 residues: Pantothenate synthetase (283 aa).

An ATP-binding site is contributed by 30-37; the sequence is MGNLHNGH. Histidine 37 functions as the Proton donor in the catalytic mechanism. A (R)-pantoate-binding site is contributed by glutamine 61. Beta-alanine is bound at residue glutamine 61. 149–152 contacts ATP; sequence GEKD. Glutamine 155 contributes to the (R)-pantoate binding site. 186–189 serves as a coordination point for ATP; the sequence is LSSR.

Belongs to the pantothenate synthetase family. As to quaternary structure, homodimer.

The protein localises to the cytoplasm. The catalysed reaction is (R)-pantoate + beta-alanine + ATP = (R)-pantothenate + AMP + diphosphate + H(+). It participates in cofactor biosynthesis; (R)-pantothenate biosynthesis; (R)-pantothenate from (R)-pantoate and beta-alanine: step 1/1. Functionally, catalyzes the condensation of pantoate with beta-alanine in an ATP-dependent reaction via a pantoyl-adenylate intermediate. This Shigella flexneri serotype 5b (strain 8401) protein is Pantothenate synthetase.